Reading from the N-terminus, the 342-residue chain is Periplasmic protein TorT (342 aa).

Residues 1-18 form the signal peptide; the sequence is MRVLLFLLLSLFMLPAFS.

The protein belongs to the bacterial solute-binding protein 2 family.

Its subcellular location is the periplasm. In terms of biological role, upon binding a putative inducer it probably interacts with TorS and allows it to play a role in the induction of the torCAD operon for trimethylamine N-oxide reductase. The chain is Periplasmic protein TorT (torT) from Escherichia coli (strain K12).